Reading from the N-terminus, the 181-residue chain is Adenylate kinase (181 aa).

An ATP-binding site is contributed by 10-15 (GAGKGT). Residues 30 to 59 (STGDLFRANIGQATALGVEAKKYIDAGELV) are NMP. AMP is bound by residues Thr31, Arg36, 57 to 59 (ELV), 85 to 88 (GFPR), and Gln92. Residues 126-132 (ARGRADD) form an LID region. Arg127 serves as a coordination point for ATP. The AMP site is built by Arg129 and Arg140. Gly166 is a binding site for ATP.

This sequence belongs to the adenylate kinase family. In terms of assembly, monomer.

The protein resides in the cytoplasm. The catalysed reaction is AMP + ATP = 2 ADP. Its pathway is purine metabolism; AMP biosynthesis via salvage pathway; AMP from ADP: step 1/1. Catalyzes the reversible transfer of the terminal phosphate group between ATP and AMP. Plays an important role in cellular energy homeostasis and in adenine nucleotide metabolism. The protein is Adenylate kinase of Rhodococcus erythropolis (strain PR4 / NBRC 100887).